Consider the following 213-residue polypeptide: Embryo-specific protein ATS3 (213 aa).

Positions 1–21 are cleaved as a signal peptide; sequence MTFPSLSVSFLFFAFIFVTHA. One can recognise a PLAT domain in the interval 34-148; sequence CPYTVVVMTS…LNTWYGHNNC (115 aa). Residues 147-188 are disordered; it reads NCNTTGRPSSPDLPPPHFPPEFPPETPTTPPPPPPRPSAASR. N149 carries N-linked (GlcNAc...) asparagine glycosylation. The segment covering 157–183 has biased composition (pro residues); the sequence is PDLPPPHFPPEFPPETPTTPPPPPPRP.

Expressed in seeds. Expression is restricted to the developing embryo.

It localises to the secreted. May play a role during embryo development. This chain is Embryo-specific protein ATS3, found in Arabidopsis thaliana (Mouse-ear cress).